The sequence spans 481 residues: Glutamyl-tRNA(Gln) amidotransferase subunit A (481 aa).

Active-site charge relay system residues include K74 and S149. The active-site Acyl-ester intermediate is the S173.

It belongs to the amidase family. GatA subfamily. In terms of assembly, heterotrimer of A, B and C subunits.

The enzyme catalyses L-glutamyl-tRNA(Gln) + L-glutamine + ATP + H2O = L-glutaminyl-tRNA(Gln) + L-glutamate + ADP + phosphate + H(+). Allows the formation of correctly charged Gln-tRNA(Gln) through the transamidation of misacylated Glu-tRNA(Gln) in organisms which lack glutaminyl-tRNA synthetase. The reaction takes place in the presence of glutamine and ATP through an activated gamma-phospho-Glu-tRNA(Gln). The protein is Glutamyl-tRNA(Gln) amidotransferase subunit A of Francisella tularensis subsp. mediasiatica (strain FSC147).